The primary structure comprises 948 residues: MDKTYQPHAIETSWYQTWESENYFAPQGAGDSYTIMIPPPNVTGSLHMGHGFNNAIMDALIRFRRMQGRNTLWQPGTDHAGIATQMLVERQIEAQGQNRHDLGREKFLEKVWEWKDQSGGNISRQIRRLGSSVDWSRERFTMDDGLSEAVKEAFVRLHEDGLIYRGKRLVNWDTKLHTAISDLEVENHDEKGFLWNLKYPLADGAKTAEGNDYLIVATTRPETMLGDSAVAVNPEDERYKALIGKFVELPLVGRRIPIIADDYCDPEFGTGCVKITPAHDFNDYEVGKRHNLPLLNIFDKNAAVLPACQVFNLDGSLNDSVDGKIPAEYVGLDRFEARKQIVAAFDAAGLLVSVDDHALKVPKGDRSGTVIEPWLTDQWYVSTKPLAEPAIAAVEDGRIAFVPKQYENMYFSWMRDIQDWCISRQLWWGHRIPAWYDESGKVYVGRDEAEVRAKHNLGPDVALQQDNDVLDTWFSSGLWTFSTLGWPEQTDFLKTFHPTDVLVTGFDIIFFWVARMIMLTMHLVKNEDGTPQVPFKTVYVHGLVRDGQGQKMSKSKGNVLDPLDIIDGIDLETLVQKRTTGLMQPKLQKAIEKQTRAEFADGIASYGTDALRFTFCSLATTGRDIKFDMGRVEGYRNFCNKIWNAARYVLDKGEDCGQNGEAYELSLADRWIISQLQRTEAEVTRQLDQFRFDLAAQALYEFIWNQYCDWYLELSKPVLWDENSPVERQRGTRRTLVRVLEVALRLAHPFMPFITEEIWQRLAPLAGSTGKTIMLQPWPVANETRIDQGAEDDIEWLKGLMLGTRNIRAEMNIGPGKPLALFLKNVSAEDQRRLTENEALLKKLARLESITVLAAGDEAPLSATALVGEMEVLVPMAGLIDKGAELARLDKEIQRLQGEVQRVGGKLSNPSFVDKAPAEVIEKERAKLAEAEQALGKLAEQHARISSL.

Residues 40 to 50 (PNVTGSLHMGH) carry the 'HIGH' region motif. Positions 551–555 (KMSKS) match the 'KMSKS' region motif. Position 554 (Lys554) interacts with ATP. The stretch at 879–947 (LIDKGAELAR…LAEQHARISS (69 aa)) forms a coiled coil.

The protein belongs to the class-I aminoacyl-tRNA synthetase family. ValS type 1 subfamily. In terms of assembly, monomer.

The protein localises to the cytoplasm. The enzyme catalyses tRNA(Val) + L-valine + ATP = L-valyl-tRNA(Val) + AMP + diphosphate. In terms of biological role, catalyzes the attachment of valine to tRNA(Val). As ValRS can inadvertently accommodate and process structurally similar amino acids such as threonine, to avoid such errors, it has a 'posttransfer' editing activity that hydrolyzes mischarged Thr-tRNA(Val) in a tRNA-dependent manner. This chain is Valine--tRNA ligase, found in Pseudomonas fluorescens (strain ATCC BAA-477 / NRRL B-23932 / Pf-5).